The sequence spans 125 residues: Cholecystokinin-8 (125 aa).

A signal peptide spans 1-20; sequence MYSGICSCLFLAVLSSSSLG. Residues 21–105 constitute a propeptide that is removed on maturation; that stretch reads QQISGSQHAN…FDPTHRIKDR (85 aa). Tyr107 is modified (sulfotyrosine). At Phe113 the chain carries Phenylalanine amide. Residues 114-125 constitute a propeptide that is removed on maturation; that stretch reads GRRSAEEYEYSS.

This sequence belongs to the gastrin/cholecystokinin family.

It localises to the secreted. Functionally, hypotensive neuropeptide that binds cholecystokinin receptors (CCKAR). The sequence is that of Cholecystokinin-8 (CCK) from Python molurus (Indian python).